Consider the following 872-residue polypeptide: Translation initiation factor IF-2 (872 aa).

Basic and acidic residues predominate over residues 130–155 (AEEEAARAAEEEAARLAEEEAARRAA). Residues 130–282 (AEEEAARAAE…RERERLKHMQ (153 aa)) are disordered. Over residues 156 to 181 (EPQSEPEAAAPAAEPVAPTAPVAAAP) the composition is skewed to low complexity. Positions 182-194 (APAPATPVAPAQP) are enriched in pro residues. Residues 195 to 211 (KPVAAAAPAGDATAVPR) are compositionally biased toward low complexity. Over residues 271–282 (RARERERLKHMQ) the composition is skewed to basic and acidic residues. Positions 371 to 539 (TRPPVVTVMG…AILLQAEILD (169 aa)) constitute a tr-type G domain. A G1 region spans residues 380–387 (GHVDHGKT). GTP is bound at residue 380–387 (GHVDHGKT). The tract at residues 405–409 (GITQH) is G2. The segment at 427–430 (DTPG) is G3. Residues 427–431 (DTPGH) and 481–484 (NKID) each bind GTP. Residues 481-484 (NKID) form a G4 region. The segment at 517 to 519 (SAK) is G5.

The protein belongs to the TRAFAC class translation factor GTPase superfamily. Classic translation factor GTPase family. IF-2 subfamily.

The protein resides in the cytoplasm. One of the essential components for the initiation of protein synthesis. Protects formylmethionyl-tRNA from spontaneous hydrolysis and promotes its binding to the 30S ribosomal subunits. Also involved in the hydrolysis of GTP during the formation of the 70S ribosomal complex. This chain is Translation initiation factor IF-2, found in Paramagnetospirillum magneticum (strain ATCC 700264 / AMB-1) (Magnetospirillum magneticum).